We begin with the raw amino-acid sequence, 128 residues long: Holo-[acyl-carrier-protein] synthase (128 aa).

Mg(2+) is bound by residues Asp8 and Glu60.

Belongs to the P-Pant transferase superfamily. AcpS family. The cofactor is Mg(2+).

The protein localises to the cytoplasm. The enzyme catalyses apo-[ACP] + CoA = holo-[ACP] + adenosine 3',5'-bisphosphate + H(+). In terms of biological role, transfers the 4'-phosphopantetheine moiety from coenzyme A to a Ser of acyl-carrier-protein. This Anaeromyxobacter dehalogenans (strain 2CP-1 / ATCC BAA-258) protein is Holo-[acyl-carrier-protein] synthase.